The following is a 123-amino-acid chain: UPF0102 protein Mflv_4140 (123 aa).

This sequence belongs to the UPF0102 family.

The chain is UPF0102 protein Mflv_4140 from Mycolicibacterium gilvum (strain PYR-GCK) (Mycobacterium gilvum (strain PYR-GCK)).